Reading from the N-terminus, the 619-residue chain is Probable galacturonosyltransferase 7 (619 aa).

Residues 1 to 19 lie on the Cytoplasmic side of the membrane; that stretch reads MKGGGGGGGGGGGGKRRWK. Residues 20 to 40 traverse the membrane as a helical; Signal-anchor for type II membrane protein segment; sequence VLVIGVLVLVILSMLVPLAFL. Over 41 to 619 the chain is Lumenal; it reads LGLHNGFHSP…RFLSDCNVNP (579 aa). Residues Asn-68, Asn-106, Asn-132, Asn-343, and Asn-421 are each glycosylated (N-linked (GlcNAc...) asparagine). Positions 95–139 are disordered; it reads KSDINVGSRDVNATSGTDSKKRGLPVSPTVVANPSPANKTKSEAS. A compositionally biased stretch (polar residues) spans 124–139; that stretch reads VVANPSPANKTKSEAS.

It belongs to the glycosyltransferase 8 family. Expressed in roots, inflorescences, flowers, siliques, leaves and stems.

The protein localises to the golgi apparatus membrane. The protein operates within glycan metabolism; pectin biosynthesis. Its function is as follows. May be involved in pectin biosynthesis. The protein is Probable galacturonosyltransferase 7 (GAUT7) of Arabidopsis thaliana (Mouse-ear cress).